Reading from the N-terminus, the 768-residue chain is Valine--tRNA ligase (768 aa).

A 'HIGH' region motif is present at residues 37-47 (PTVSGKMHMGH). The 'KMSKS' region signature appears at 510–514 (KMSKS). Residue lysine 513 coordinates ATP.

Belongs to the class-I aminoacyl-tRNA synthetase family. ValS type 2 subfamily.

The protein resides in the cytoplasm. It carries out the reaction tRNA(Val) + L-valine + ATP = L-valyl-tRNA(Val) + AMP + diphosphate. In terms of biological role, catalyzes the attachment of valine to tRNA(Val). As ValRS can inadvertently accommodate and process structurally similar amino acids such as threonine, to avoid such errors, it has a 'posttransfer' editing activity that hydrolyzes mischarged Thr-tRNA(Val) in a tRNA-dependent manner. The protein is Valine--tRNA ligase of Picrophilus torridus (strain ATCC 700027 / DSM 9790 / JCM 10055 / NBRC 100828 / KAW 2/3).